The following is a 102-amino-acid chain: MNKAILHTIIVYTLASCPYCIKAKALLDEKNVAYEEIEVSNFTQEEKEKFIKKSGGKKTVPQIFIDNMHVGGCDALFDLEKEGRLDKLLENQPKTTSPAAGA.

Residues 1–96 (MNKAILHTII…KLLENQPKTT (96 aa)) form the Glutaredoxin domain. A disulfide bridge links Cys17 with Cys20.

It belongs to the glutaredoxin family. Monomer.

The protein resides in the cytoplasm. In terms of biological role, has a glutathione-disulfide oxidoreductase activity in the presence of NADPH and glutathione reductase. Reduces low molecular weight disulfides and proteins. The protein is Glutaredoxin 1 (grxC1) of Rickettsia conorii (strain ATCC VR-613 / Malish 7).